A 317-amino-acid polypeptide reads, in one-letter code: Succinate receptor 1 (317 aa).

At Met1–Ser23 the chain is on the extracellular side. Residue Asn4 is glycosylated (N-linked (GlcNAc...) asparagine). Residues Ala24–Cys47 form a helical membrane-spanning segment. Topologically, residues Met48–Asn55 are cytoplasmic. A helical membrane pass occupies residues Val56 to Ile76. Over Lys77 to Asn101 the chain is Extracellular. Cys91 and Cys168 are oxidised to a cystine. A helical transmembrane segment spans residues Leu102–Leu119. Residues Met120–Glu133 are Cytoplasmic-facing. Residues Phe134 to Ile157 form a helical membrane-spanning segment. The Extracellular portion of the chain corresponds to Asn158–Asn180. Residues Leu181–Tyr204 traverse the membrane as a helical segment. Topologically, residues Lys205–Arg228 are cytoplasmic. A helical membrane pass occupies residues Leu229–Ile246. Residues Met247 to Pro277 are Extracellular-facing. The chain crosses the membrane as a helical span at residues Leu278–Gly294. Residues Asp295–Thr317 lie on the Cytoplasmic side of the membrane.

It belongs to the G-protein coupled receptor 1 family. Predominantly expressed in the kidney (proximal and distal tubules and the juxtaglomerular apparatus). Weakly expressed in liver, spleen and small intestine. Highly expressed in immature dendritic cells, expression rapidly downregulates after maturation. Also expressed in macrophages. Specifically expressed in intestinal tuft cells. Expression in whole muscle is attributable to major non-myofibrillar resident cell types, including stromal, endothelial and satellite cell populations.

The protein localises to the cell membrane. G protein-coupled receptor for succinate able to mediate signaling through Gq/GNAQ or Gi/GNAI second messengers depending on the cell type and the processes regulated. Succinate-SUCNR1 signaling serves as a link between metabolic stress, inflammation and energy homeostasis. In macrophages, plays a range of immune-regulatory roles. During inflammation, succinate-SUCNR1 signaling may act as an anti-inflammatory mediator or boost inflammation depending on the inflammatory status of cells. Hyperpolarizes M2 macrophages versus M1 phenotype through Gq signaling by regulating the transcription of genes involved in immune function. In activated M1 macrophages, plays a pro-inflammatory role in response to LPS. Expressed in dendritic cells, where it is involved in the sensing of immunological danger and enhances immunity. Mediates succinate triggered intracelleular calcium mobilization, induces migratory responses and acts in synergy with Toll-like receptor ligands for the production of proinflammatory cytokines as well as an enhancement of antigen-specific activation of helper T cells. In the small intestine, mediates the activation of tuft cells by dietary succinate and triggers type 2 immunity. In adipocytes, plays an important role in the control of energy metabolism. In response to succinate, controls leptin expression in an AMPK-JNK-CEBPA-dependent as well as circadian clock-regulated manner. In muscle tissue, is expressed in non-muscle cells and coordinates muscle remodeling in response to the succinate produced during exercise training in a paracrine manner. In retina, acts as a mediator of vessel growth during retinal development. In response to succinate, regulates the production of angiogenic factors, including VEGF, by retinal ganglion neurons. The protein is Succinate receptor 1 (Sucnr1) of Mus musculus (Mouse).